The following is a 244-amino-acid chain: Small ribosomal subunit protein uS3 (244 aa).

A KH type-2 domain is found at 38-106 (IRKYLNARLA…DIQINIFEVK (69 aa)). Positions 217–244 (TQSKESGRGNNGGNNGGGKNFKRKKNNR) are disordered. A compositionally biased stretch (gly residues) spans 225–235 (GNNGGNNGGGK).

It belongs to the universal ribosomal protein uS3 family. As to quaternary structure, part of the 30S ribosomal subunit. Forms a tight complex with proteins S10 and S14.

Binds the lower part of the 30S subunit head. Binds mRNA in the 70S ribosome, positioning it for translation. This is Small ribosomal subunit protein uS3 from Bacteroides fragilis (strain ATCC 25285 / DSM 2151 / CCUG 4856 / JCM 11019 / LMG 10263 / NCTC 9343 / Onslow / VPI 2553 / EN-2).